A 253-amino-acid chain; its full sequence is MRKPIIAGNWKMNKTLGEAVSFVEEVKSSIPAADKAEAVVCAPALFLEKLTSAVKGTDLKVGAQNMHFEENGAFTGEISPVALKDLGVDYCVIGHSERREMFAETDETVNKKAHAAFKHGIVPIICVGETLEEREAGKTNDLVADQVKKGLAGLSEEQVAASVIAYEPIWAIGTGKSSTAKDANDVCAHIRKVVAESFSQETADKLRIQYGGSVKPANIKEYMAESDIDGALVGGASLEPQSFVQLLEEGQYE.

9–11 (NWK) is a binding site for substrate. The active-site Electrophile is H95. Residue E167 is the Proton acceptor of the active site. Substrate contacts are provided by residues G173, S213, and 234 to 235 (GG). S213 is modified (phosphoserine).

It belongs to the triosephosphate isomerase family. As to quaternary structure, homodimer.

It is found in the cytoplasm. It catalyses the reaction D-glyceraldehyde 3-phosphate = dihydroxyacetone phosphate. The protein operates within carbohydrate biosynthesis; gluconeogenesis. It functions in the pathway carbohydrate degradation; glycolysis; D-glyceraldehyde 3-phosphate from glycerone phosphate: step 1/1. Functionally, involved in the gluconeogenesis. Catalyzes stereospecifically the conversion of dihydroxyacetone phosphate (DHAP) to D-glyceraldehyde-3-phosphate (G3P). This is Triosephosphate isomerase from Bacillus velezensis (strain DSM 23117 / BGSC 10A6 / LMG 26770 / FZB42) (Bacillus amyloliquefaciens subsp. plantarum).